The primary structure comprises 236 residues: VIGGDECNINEHRFLVALYHSRSRTFLCGGTLINQEWVLTAAHCDRFFMYIRLGMHNKNVNFDDEQRRSPKEKYFFRCSNNFTKWDKDIMLIRLDSPVNNSAHIAPLSLPSNPPSVGSVCRVMGWGQTTSPQEDLSDVPRCANINLFNFTVCRAAYPWLPATSRVLCAGDMEGGIDTCNRDSGGPLICNGQFQGIVSKGQNLCAQPRKPALYTKVFDHLDWIQSIIAGNKTVTCPP.

Positions 1–227 (VIGGDECNIN…HLDWIQSIIA (227 aa)) constitute a Peptidase S1 domain. 6 disulfides stabilise this stretch: cysteine 7–cysteine 141, cysteine 28–cysteine 44, cysteine 78–cysteine 234, cysteine 120–cysteine 188, cysteine 152–cysteine 167, and cysteine 178–cysteine 203. Histidine 43 functions as the Charge relay system in the catalytic mechanism. The N-linked (GlcNAc...) asparagine glycan is linked to asparagine 81. The active-site Charge relay system is the aspartate 88. Residues asparagine 99 and asparagine 148 are each glycosylated (N-linked (GlcNAc...) asparagine). The Charge relay system role is filled by serine 182. A glycan (N-linked (GlcNAc...) asparagine) is linked at asparagine 229.

The protein belongs to the peptidase S1 family. Snake venom subfamily. Monomer. In terms of processing, N-glycosylated by units composed of Fuc, Man, GlcNAc, Gal and NeuAC residues. Expressed by the venom gland.

The protein resides in the secreted. With respect to regulation, inhibited by 4-(2-aminoethyl)-benzensulfonyl fluoride. Not inhibited by antithrombin-III. Thrombin-like snake venom serine protease. Cleaves bonds after Arg and Lys, converts fibrinogen (FGA and FGB) to fibrin and releases both fibrinopeptides A and B, and fibrinogen peptide Bbeta1-42. Has a blood clotting activity. The chain is Thrombin-like enzyme kangshuanmei from Gloydius brevicauda (Korean slamosa snake).